A 77-amino-acid chain; its full sequence is Large ribosomal subunit protein uL29 (77 aa).

It belongs to the universal ribosomal protein uL29 family.

This chain is Large ribosomal subunit protein uL29, found in Methanopyrus kandleri (strain AV19 / DSM 6324 / JCM 9639 / NBRC 100938).